A 201-amino-acid polypeptide reads, in one-letter code: Single-stranded DNA-binding protein, mitochondrial (201 aa).

The SSB domain maps to 71 to 184; it reads VHRAIICGKV…RDGKIRMIKY (114 aa).

Its subcellular location is the mitochondrion. In terms of biological role, binds to ss-DNA. The polypeptide is Single-stranded DNA-binding protein, mitochondrial (Arabidopsis thaliana (Mouse-ear cress)).